A 211-amino-acid chain; its full sequence is Claudin-1 (211 aa).

Residues 1 to 7 (MANAGLQ) are Cytoplasmic-facing. Residues 8-28 (LLGFILASLGWIGSIVSTALP) form a helical membrane-spanning segment. Over 29-81 (QWKIYSYAGDNIVTAQAIYEGLWMSCVSQSTGQIQCKVFDSLLNLNSTLQATR) the chain is Extracellular. Cysteine 54 and cysteine 64 are disulfide-bonded. The helical transmembrane segment at 82–102 (ALMVIGILLGLIAIFVSTIGM) threads the bilayer. Residues 103–115 (KCMRCLEDDEVQK) are Cytoplasmic-facing. Residues 116 to 136 (MWMAVIGGIIFVISGLATLVA) traverse the membrane as a helical segment. Topologically, residues 137–163 (TAWYGNRIVQEFYDPMTPVNARYEFGQ) are extracellular. The helical transmembrane segment at 164-184 (ALFTGWAAASLCLLGGALLSC) threads the bilayer. The Cytoplasmic segment spans residues 185-211 (SCPRKTTSYPTPRPYPKPTPSSGKDYV). The interval 190 to 211 (TTSYPTPRPYPKPTPSSGKDYV) is disordered. The segment at 210-211 (YV) is interactions with TJP1, TJP2, TJP3 and PATJ.

This sequence belongs to the claudin family. As to quaternary structure, can form homo- and heteropolymers with other CLDN. Homopolymers interact with CLDN3, but not CLDN2, homopolymers. Directly interacts with TJP1/ZO-1, TJP2/ZO-2 and TJP3/ZO-3. Interacts with MPDZ and PATJ. Interacts with OCLN, CD81, CLDN4, CLDN6 and CLDN9. In terms of tissue distribution, detected in epididymis (at protein level). Detected in testis and epididymis.

The protein resides in the cell junction. Its subcellular location is the tight junction. It is found in the cell membrane. The protein localises to the basolateral cell membrane. Claudins function as major constituents of the tight junction complexes that regulate the permeability of epithelia. While some claudin family members play essential roles in the formation of impermeable barriers, others mediate the permeability to ions and small molecules. Often, several claudin family members are coexpressed and interact with each other, and this determines the overall permeability. CLDN1 is required to prevent the paracellular diffusion of small molecules through tight junctions in the epidermis and is required for the normal barrier function of the skin. Required for normal water homeostasis and to prevent excessive water loss through the skin, probably via an indirect effect on the expression levels of other proteins, since CLDN1 itself seems to be dispensable for water barrier formation in keratinocyte tight junctions. The chain is Claudin-1 (Cldn1) from Rattus norvegicus (Rat).